An 878-amino-acid polypeptide reads, in one-letter code: E3 ubiquitin-protein ligase BRE1-like 1 (878 aa).

Residues 1 to 21 (MASTGEPDRKRRHFSSISPSE) form a disordered region. Coiled-coil stretches lie at residues 48-76 (QNLK…IKEK), 200-261 (QLAL…ELQQ), 293-382 (SDRE…EKLQ), and 537-624 (LDMY…ILKS). An RING-type zinc finger spans residues 826–865 (CKACNDRPKEVVITKCYHLFCNPCVQKLTGTRQKKCPTCS).

It belongs to the BRE1 family. As to quaternary structure, may act as a tetramer consisting of two copies of HUB1 and two copies of HUB2. Interacts with MED21. Ubiquitously expressed.

It is found in the nucleus. The catalysed reaction is S-ubiquitinyl-[E2 ubiquitin-conjugating enzyme]-L-cysteine + [acceptor protein]-L-lysine = [E2 ubiquitin-conjugating enzyme]-L-cysteine + N(6)-ubiquitinyl-[acceptor protein]-L-lysine.. It participates in protein modification; protein ubiquitination. Its function is as follows. E3 ubiquitin-protein ligase that monoubiquitinates H2B to form H2BK143ub1. H2BK143ub1 gives a specific tag for epigenetic transcriptional activation and is also prerequisite for H3K4me and maybe H3K79me. It thereby plays a central role in histone code and gene regulation. Forms a ubiquitin ligase complex in cooperation with the E2 enzyme UBC2/RAD6. Required for the regulation of flowering time and defense against necrotrophic fungal pathogens. Involved in the control of seed dormancy and germination. The chain is E3 ubiquitin-protein ligase BRE1-like 1 (HUB1) from Arabidopsis thaliana (Mouse-ear cress).